We begin with the raw amino-acid sequence, 441 residues long: Ribosomal protein uS12 methylthiotransferase RimO (441 aa).

Positions 8-118 constitute an MTTase N-terminal domain; it reads PKIGFVSLGC…VLEHVHHYTP (111 aa). Cysteine 17, cysteine 53, cysteine 82, cysteine 150, cysteine 154, and cysteine 157 together coordinate [4Fe-4S] cluster. Residues 136–373 enclose the Radical SAM core domain; that stretch reads LTPRHYAYLK…MQLQQQISAE (238 aa). A TRAM domain is found at 376 to 441; sequence QEKVGREILV…DEYDLWGTRV (66 aa).

This sequence belongs to the methylthiotransferase family. RimO subfamily. Requires [4Fe-4S] cluster as cofactor.

It localises to the cytoplasm. It catalyses the reaction L-aspartate(89)-[ribosomal protein uS12]-hydrogen + (sulfur carrier)-SH + AH2 + 2 S-adenosyl-L-methionine = 3-methylsulfanyl-L-aspartate(89)-[ribosomal protein uS12]-hydrogen + (sulfur carrier)-H + 5'-deoxyadenosine + L-methionine + A + S-adenosyl-L-homocysteine + 2 H(+). Catalyzes the methylthiolation of an aspartic acid residue of ribosomal protein uS12. The polypeptide is Ribosomal protein uS12 methylthiotransferase RimO (Klebsiella pneumoniae subsp. pneumoniae (strain ATCC 700721 / MGH 78578)).